We begin with the raw amino-acid sequence, 490 residues long: Prostaglandin E2 receptor EP4 subtype (490 aa).

Topologically, residues 1–19 (MSTPGVNASASLSPDRLNS) are extracellular. N-linked (GlcNAc...) asparagine glycosylation is present at asparagine 7. The chain crosses the membrane as a helical span at residues 20–43 (PVTIPAVMFIFGVVGNLVAIVVLC). The Cytoplasmic segment spans residues 44–55 (KSRKEQKETTFY). A helical membrane pass occupies residues 56–79 (TLVCGLAVTDLLGTLLVSPVTIAT). Topologically, residues 80-96 (YMKGQWPGGQPLCEYST) are extracellular. Cysteine 92 and cysteine 170 are oxidised to a cystine. A helical membrane pass occupies residues 97 to 115 (FILLFFSLSGLSIICAMSV). At 116 to 135 (ERYLAINHAYFYSHYVDKRL) the chain is on the cytoplasmic side. A helical membrane pass occupies residues 136 to 160 (AGLTLFAVYASNVLFCALPNMGLGS). The Extracellular segment spans residues 161–184 (SRLQYPDTWCFIDWTTNVTAHAAY). A helical membrane pass occupies residues 185–211 (SYMYAGFSSFLILATVLCNVLVCGALL). Residues 212 to 269 (RMHRQFMRRTSLGTEQHHAAAAAVTSVASRGHPAASPALPRLSDFRRRRSFRRIAGAE) lie on the Cytoplasmic side of the membrane. A helical membrane pass occupies residues 270–297 (IQMVILLIATSLVVLICSIPLVVRVFVN). Residues 298-314 (QLYQPSLEREVSKNPDL) lie on the Extracellular side of the membrane. Residues 315 to 334 (QAIRIASVNPILDPWIYILL) traverse the membrane as a helical segment. Residues 335 to 490 (RKTVLSKAIE…ETLNLSEKCI (156 aa)) lie on the Cytoplasmic side of the membrane. The tract at residues 359–378 (ERSGQHCSDSQRTSSAMSGH) is disordered. Residues 363 to 378 (QHCSDSQRTSSAMSGH) show a composition bias toward polar residues. A phosphoserine mark is found at serine 376, serine 379, serine 381, and serine 384. Residues 439–451 (SETSDSSQGQDSE) show a composition bias toward polar residues. The segment at 439 to 477 (SETSDSSQGQDSESVLLVDEAGGSGRAGPAPKGSSLQVT) is disordered.

It belongs to the G-protein coupled receptor 1 family. In terms of assembly, interacts with FEM1A. In terms of processing, phosphorylation mediates agonist-mediated desensitization by promoting cytoplasmic retention.

The protein localises to the cell membrane. In terms of biological role, receptor for prostaglandin E2 (PGE2). The activity of this receptor is mediated by G(s) proteins that stimulate adenylate cyclase. Has a relaxing effect on smooth muscle. May play an important role in regulating renal hemodynamics, intestinal epithelial transport, adrenal aldosterone secretion, and uterine function. The chain is Prostaglandin E2 receptor EP4 subtype (PTGER4) from Pan troglodytes (Chimpanzee).